The following is a 337-amino-acid chain: uncharacterized protein (337 aa).

Positions 248-276 form a coiled coil; that stretch reads NELKAETTIQVLREQLRQEKKLKEQVLSL. The interval 285–337 is disordered; it reads GGRGEEFGKPDETPSSASVGDDNFPSSTNHTFEARRRPSSLSSGGALKPSKIL. Basic and acidic residues predominate over residues 287–296; that stretch reads RGEEFGKPDE. Over residues 297 to 315 the composition is skewed to polar residues; the sequence is TPSSASVGDDNFPSSTNHT.

This is an uncharacterized protein from Invertebrate iridescent virus 3 (IIV-3).